A 215-amino-acid polypeptide reads, in one-letter code: Probable phosphoglycerate mutase GpmB (215 aa).

Substrate contacts are provided by residues 8-15 (RHGETQWN), 21-22 (QG), Arg58, Lys60, 82-85 (ELDM), 104-105 (RR), and 151-152 (GI). His9 (tele-phosphohistidine intermediate) is an active-site residue. The active-site Proton donor/acceptor is the Glu82.

The protein belongs to the phosphoglycerate mutase family. GpmB subfamily.

It catalyses the reaction (2R)-2-phosphoglycerate = (2R)-3-phosphoglycerate. It functions in the pathway carbohydrate degradation; glycolysis; pyruvate from D-glyceraldehyde 3-phosphate: step 3/5. This Salmonella agona (strain SL483) protein is Probable phosphoglycerate mutase GpmB.